The sequence spans 447 residues: Cysteine--tRNA ligase (447 aa).

Cys28 is a binding site for Zn(2+). Residues 30-40 (PTVYNYIHIGN) carry the 'HIGH' region motif. Residues Cys211, His236, and Glu240 each contribute to the Zn(2+) site. The 'KMSKS' region motif lies at 268–272 (KMSKS). An ATP-binding site is contributed by Lys271.

The protein belongs to the class-I aminoacyl-tRNA synthetase family. As to quaternary structure, monomer. Zn(2+) is required as a cofactor.

It localises to the cytoplasm. The catalysed reaction is tRNA(Cys) + L-cysteine + ATP = L-cysteinyl-tRNA(Cys) + AMP + diphosphate. This chain is Cysteine--tRNA ligase, found in Streptococcus agalactiae serotype Ia (strain ATCC 27591 / A909 / CDC SS700).